A 1118-amino-acid polypeptide reads, in one-letter code: Sodium-driven chloride bicarbonate exchanger (1118 aa).

Disordered regions lie at residues 1 to 23, 58 to 96, 245 to 312, and 457 to 476; these read MEIKDQGAQMEPLLPTRNDEEAV, GRKSHRRHRHRGHKHRKRDRERDSGLEDGRESPSFDTPS, KQSE…PPHQ, and NGTAAHGEAEPHGGHSGPEL. Topologically, residues 1 to 509 are cytoplasmic; the sequence is MEIKDQGAQM…DFRDAFSLQC (509 aa). Basic residues predominate over residues 59 to 76; that stretch reads RKSHRRHRHRGHKHRKRD. Residues 77 to 90 show a composition bias toward basic and acidic residues; it reads RERDSGLEDGRESP. S89 is subject to Phosphoserine. Phosphothreonine is present on T94. Polar residues predominate over residues 248–264; the sequence is EPNSMDKNAGQVVSPQS. S276 is subject to Phosphoserine. The helical transmembrane segment at 510 to 530 threads the bilayer; the sequence is LASFLFLYCACMSPVITFGGL. At 531-538 the chain is on the extracellular side; the sequence is LGEATEGR. A helical transmembrane segment spans residues 539–559; sequence ISAIESLFGASMTGIAYSLFG. Topologically, residues 560-562 are cytoplasmic; that stretch reads GQP. A helical membrane pass occupies residues 563–583; the sequence is LTILGSTGPVLVFEKILFKFC. The Extracellular segment spans residues 584-596; sequence KEYGLSYLSLRAS. Residues 597–617 traverse the membrane as a helical segment; the sequence is IGLWTATLCIILVATDASSLV. At 618–626 the chain is on the cytoplasmic side; that stretch reads CYITRFTEE. Residues 627–647 traverse the membrane as a helical segment; that stretch reads AFASLICIIFIYEALEKLFEL. At 648-720 the chain is on the extracellular side; that stretch reads SEAYPINMHN…VGRACGHDHP (73 aa). N-linked (GlcNAc...) asparagine glycosylation is found at N674, N677, N687, and N697. Residues 721–741 form a helical membrane-spanning segment; the sequence is YVPDVLFWSVILFFSTVTLSA. At 742–762 the chain is on the cytoplasmic side; the sequence is TLKQFKTSRYFPTKVRSIVSD. Residues 763-783 form a helical membrane-spanning segment; it reads FAVFLTILCMVLIDYAIGIPS. Over 784–809 the chain is Extracellular; the sequence is PKLQVPSVFKPTRDDRGWFVTPLGPN. A helical transmembrane segment spans residues 810 to 830; sequence PWWTVIAAIIPALLCTILIFM. Over 831-855 the chain is Cytoplasmic; sequence DQQITAVIINRKEHKLKKGCGYHLD. Residues 856-876 traverse the membrane as a helical segment; sequence LLMVAVMLGVCSIMGLPWFVA. Topologically, residues 877-912 are extracellular; that stretch reads ATVLSITHVNSLKLESECSAPGEQPKFLGIREQRVT. The helical transmembrane segment at 913-933 threads the bilayer; sequence GLMIFILMGSSVFMTSILKFI. Topologically, residues 934 to 935 are cytoplasmic; that stretch reads PM. Residues 936–956 traverse the membrane as a helical segment; it reads PVLYGVFLYMGASSLKGIQFF. Over 957–998 the chain is Extracellular; the sequence is DRIKLFWMPAKHQPDFIYLRHVPLRKVHLFTIIQMSCLGLLW. The chain crosses the membrane as a helical span at residues 999–1019; the sequence is IIKVSRAAIVFPMMVLALVFV. Residues 1020–1118 are Cytoplasmic-facing; that stretch reads RKLMDLLFTK…SSFPSKSSPS (99 aa). Phosphoserine is present on residues S1057 and S1085.

This sequence belongs to the anion exchanger (TC 2.A.31) family. Predominantly expressed in the brain.

The protein resides in the basolateral cell membrane. It is found in the apical cell membrane. It localises to the cell projection. Its subcellular location is the dendrite. The protein localises to the axon. The protein resides in the perikaryon. It is found in the presynapse. It localises to the postsynapse. It catalyses the reaction 2 hydrogencarbonate(out) + chloride(in) + Na(+)(out) = 2 hydrogencarbonate(in) + chloride(out) + Na(+)(in). In terms of biological role, sodium/bicarbonate cotransporter which plays an important role in regulating intracellular pH. Has been shown to act as a sodium/bicarbonate cotransporter in exchange for intracellular chloride. Has also been shown to act as a sodium/biocarbonate cotransporter which does not couple net influx of bicarbonate to net efflux of chloride, with the observed chloride efflux being due to chloride self-exchange. Controls neuronal pH and may contribute to the secretion of cerebrospinal fluid. Acting on presynaptic intracellular pH, it promotes GABA release, reduces the excitability of CA1 pyramidal neurons, and modulates short-term synaptic plasticity. Required in retinal cells to maintain normal pH which is necessary for normal vision. In the kidney, likely to mediate bicarbonate reclamation in the apical membrane of the proximal tubules. The protein is Sodium-driven chloride bicarbonate exchanger of Homo sapiens (Human).